The sequence spans 203 residues: Endo-type membrane-bound lytic murein transglycosylase A (203 aa).

The N-terminal stretch at 1–15 (MKLRWFAFLMVLLAG) is a signal peptide. The N-palmitoyl cysteine moiety is linked to residue Cys16. Cys16 carries the S-diacylglycerol cysteine lipid modification.

The protein belongs to the transglycosylase Slt family.

It localises to the cell outer membrane. It catalyses the reaction Endolytic cleavage of the (1-&gt;4)-beta-glycosidic linkage between N-acetylmuramic acid (MurNAc) and N-acetylglucosamine (GlcNAc) residues in peptidoglycan with concomitant formation of a 1,6-anhydrobond in the MurNAc residue.. Its function is as follows. Murein-degrading enzyme. May play a role in recycling of muropeptides during cell elongation and/or cell division. Preferentially cleaves at a distance of more than two disaccharide units from the ends of the glycan chain. This Enterobacter sp. (strain 638) protein is Endo-type membrane-bound lytic murein transglycosylase A.